Consider the following 131-residue polypeptide: Arsenate reductase (131 aa).

Residues cysteine 10, cysteine 82, and cysteine 89 each act as nucleophile in the active site. Cystine bridges form between cysteine 10–cysteine 82 and cysteine 82–cysteine 89.

The protein belongs to the low molecular weight phosphotyrosine protein phosphatase family. Thioredoxin-coupled ArsC subfamily.

The protein localises to the cytoplasm. The catalysed reaction is arsenate + [thioredoxin]-dithiol + H(+) = arsenite + [thioredoxin]-disulfide + H2O. Its function is as follows. Catalyzes the reduction of arsenate [As(V)] to arsenite [As(III)]. The protein is Arsenate reductase of Staphylococcus xylosus.